The primary structure comprises 113 residues: Neocarzinostatin (113 aa).

Intrachain disulfides connect Cys37–Cys47 and Cys88–Cys93.

This sequence belongs to the neocarzinostatin family.

Its function is as follows. NCS has antibiotic activity (for Gram-positive bacteria) and antitumor activity (for certain mouse tumors). NCS binds non-covalently to a chromophore which is the cytotoxic and mutagenic component of the antibiotic. The chromophore binds to DNA as a weak intercalator and causes single- and double-strand breaks. In Streptomyces malayensis, this protein is Neocarzinostatin (ncsA).